A 138-amino-acid polypeptide reads, in one-letter code: Acidic phospholipase A2 daboiatoxin A chain (138 aa).

The N-terminal stretch at 1–16 (MRTLWIMAVCLIGVEG) is a signal peptide. Disulfide bonds link cysteine 42/cysteine 131, cysteine 44/cysteine 60, cysteine 59/cysteine 111, cysteine 65/cysteine 138, cysteine 66/cysteine 104, cysteine 73/cysteine 97, and cysteine 91/cysteine 102. Tyrosine 43, glycine 45, and glycine 47 together coordinate Ca(2+). Histidine 63 is an active-site residue. Aspartate 64 contributes to the Ca(2+) binding site. The active site involves aspartate 105.

This sequence belongs to the phospholipase A2 family. Group II subfamily. D49 sub-subfamily. Heterodimer of A and B chain; non-covalently linked. The acidic protein (B chain) has phospholipase A2 activity and the A chain weakly inhibits the B chain enzymatic activity but potentiates its lethal potency. Ca(2+) serves as cofactor. As to expression, expressed by the venom gland.

The protein localises to the secreted. The enzyme catalyses a 1,2-diacyl-sn-glycero-3-phosphocholine + H2O = a 1-acyl-sn-glycero-3-phosphocholine + a fatty acid + H(+). In terms of biological role, heterodimer (A and B chains): phospholipase A2 that acts as a presynaptic neurotoxin and shows a PLA2 activity of 1377 umol/min/mg. In vivo, induces edema and produces neurotoxic symptoms in mice. Also exhibits indirect hemolysis, a strong myonecrotic activity and cytotoxicity. PLA2 catalyzes the calcium-dependent hydrolysis of the 2-acyl groups in 3-sn-phosphoglycerides. Functionally, monomer: Snake venom phospholipase A2 (PLA2) that shows a PLA2 activity of 578 umol/min/mg. This chain is Acidic phospholipase A2 daboiatoxin A chain, found in Daboia siamensis (Eastern Russel's viper).